Reading from the N-terminus, the 95-residue chain is Aspartyl/glutamyl-tRNA(Asn/Gln) amidotransferase subunit C (95 aa).

This sequence belongs to the GatC family. As to quaternary structure, heterotrimer of A, B and C subunits.

It catalyses the reaction L-glutamyl-tRNA(Gln) + L-glutamine + ATP + H2O = L-glutaminyl-tRNA(Gln) + L-glutamate + ADP + phosphate + H(+). The catalysed reaction is L-aspartyl-tRNA(Asn) + L-glutamine + ATP + H2O = L-asparaginyl-tRNA(Asn) + L-glutamate + ADP + phosphate + 2 H(+). Its function is as follows. Allows the formation of correctly charged Asn-tRNA(Asn) or Gln-tRNA(Gln) through the transamidation of misacylated Asp-tRNA(Asn) or Glu-tRNA(Gln) in organisms which lack either or both of asparaginyl-tRNA or glutaminyl-tRNA synthetases. The reaction takes place in the presence of glutamine and ATP through an activated phospho-Asp-tRNA(Asn) or phospho-Glu-tRNA(Gln). The polypeptide is Aspartyl/glutamyl-tRNA(Asn/Gln) amidotransferase subunit C (Dehalococcoides mccartyi (strain ATCC BAA-2266 / KCTC 15142 / 195) (Dehalococcoides ethenogenes (strain 195))).